Consider the following 459-residue polypeptide: Putative flavin-containing monooxygenase 2 (459 aa).

FAD-binding positions include 17–21, glutamate 38, and 46–47; these read GAGVS and VW. 217-220 lines the NADP(+) pocket; it reads SAID.

This sequence belongs to the FMO family. FAD is required as a cofactor.

This Arabidopsis thaliana (Mouse-ear cress) protein is Putative flavin-containing monooxygenase 2 (FMO2).